Here is a 261-residue protein sequence, read N- to C-terminus: Phosphatidylglycerol--prolipoprotein diacylglyceryl transferase (261 aa).

Transmembrane regions (helical) follow at residues 19–39 (VHWY…LALY), 56–76 (LIFY…MLFY), 92–112 (WRGG…TWIF), 126–146 (FVVP…FING), 173–193 (QLYE…WFSA), 199–219 (FAVS…AEFF), and 227–247 (GFVA…MIII). Arg139 provides a ligand contact to a 1,2-diacyl-sn-glycero-3-phospho-(1'-sn-glycerol).

The protein belongs to the Lgt family.

The protein resides in the cell inner membrane. It catalyses the reaction L-cysteinyl-[prolipoprotein] + a 1,2-diacyl-sn-glycero-3-phospho-(1'-sn-glycerol) = an S-1,2-diacyl-sn-glyceryl-L-cysteinyl-[prolipoprotein] + sn-glycerol 1-phosphate + H(+). Its pathway is protein modification; lipoprotein biosynthesis (diacylglyceryl transfer). Its function is as follows. Catalyzes the transfer of the diacylglyceryl group from phosphatidylglycerol to the sulfhydryl group of the N-terminal cysteine of a prolipoprotein, the first step in the formation of mature lipoproteins. The sequence is that of Phosphatidylglycerol--prolipoprotein diacylglyceryl transferase from Coxiella burnetii (strain Dugway 5J108-111).